The following is a 612-amino-acid chain: Elongation factor 4 (612 aa).

The 183-residue stretch at 12–194 (SRIRNFSIIA…QIVEKVPAPT (183 aa)) folds into the tr-type G domain. GTP is bound by residues 24–29 (DHGKST) and 141–144 (NKID).

This sequence belongs to the TRAFAC class translation factor GTPase superfamily. Classic translation factor GTPase family. LepA subfamily.

It is found in the cell membrane. The catalysed reaction is GTP + H2O = GDP + phosphate + H(+). Functionally, required for accurate and efficient protein synthesis under certain stress conditions. May act as a fidelity factor of the translation reaction, by catalyzing a one-codon backward translocation of tRNAs on improperly translocated ribosomes. Back-translocation proceeds from a post-translocation (POST) complex to a pre-translocation (PRE) complex, thus giving elongation factor G a second chance to translocate the tRNAs correctly. Binds to ribosomes in a GTP-dependent manner. The protein is Elongation factor 4 of Bacillus subtilis (strain 168).